We begin with the raw amino-acid sequence, 74 residues long: Exodeoxyribonuclease 7 small subunit (74 aa).

The protein belongs to the XseB family. Heterooligomer composed of large and small subunits.

Its subcellular location is the cytoplasm. It catalyses the reaction Exonucleolytic cleavage in either 5'- to 3'- or 3'- to 5'-direction to yield nucleoside 5'-phosphates.. Bidirectionally degrades single-stranded DNA into large acid-insoluble oligonucleotides, which are then degraded further into small acid-soluble oligonucleotides. This Neisseria gonorrhoeae (strain ATCC 700825 / FA 1090) protein is Exodeoxyribonuclease 7 small subunit.